The chain runs to 37 residues: Defensin-A (37 aa).

Intrachain disulfides connect Cys4/Cys25, Cys10/Cys33, and Cys14/Cys35.

The protein resides in the secreted. Its function is as follows. Has antibacterial activity against M.luteus and E.coli. The sequence is that of Defensin-A from Mytilus edulis (Blue mussel).